Consider the following 254-residue polypeptide: Triosephosphate isomerase (254 aa).

12-14 contacts substrate; sequence NWK. His-99 (electrophile) is an active-site residue. Residue Glu-169 is the Proton acceptor of the active site. Substrate is bound by residues Gly-175, Ser-214, and 235–236; that span reads GG.

The protein belongs to the triosephosphate isomerase family. Homodimer.

It is found in the cytoplasm. The catalysed reaction is D-glyceraldehyde 3-phosphate = dihydroxyacetone phosphate. The protein operates within carbohydrate biosynthesis; gluconeogenesis. Its pathway is carbohydrate degradation; glycolysis; D-glyceraldehyde 3-phosphate from glycerone phosphate: step 1/1. Involved in the gluconeogenesis. Catalyzes stereospecifically the conversion of dihydroxyacetone phosphate (DHAP) to D-glyceraldehyde-3-phosphate (G3P). The polypeptide is Triosephosphate isomerase (Chelativorans sp. (strain BNC1)).